Here is a 144-residue protein sequence, read N- to C-terminus: Ribonuclease VapC1 (144 aa).

One can recognise a PINc domain in the interval 6 to 132 (VFVDGNVIVD…SFYSPDIEVL (127 aa)). 2 residues coordinate Mg(2+): D9 and D102.

It belongs to the PINc/VapC protein family. Mg(2+) serves as cofactor.

Functionally, toxic component of a type II toxin-antitoxin (TA) system. An RNase. This is Ribonuclease VapC1 from Aquifex aeolicus (strain VF5).